The primary structure comprises 32 residues: uncharacterized protein (32 aa).

This is an uncharacterized protein from Ornithodoros (relapsing fever ticks).